The chain runs to 411 residues: Probable glutamate dehydrogenase 3 (411 aa).

Residue Lys102 is part of the active site.

This sequence belongs to the Glu/Leu/Phe/Val dehydrogenases family.

It catalyses the reaction L-glutamate + NAD(+) + H2O = 2-oxoglutarate + NH4(+) + NADH + H(+). It carries out the reaction L-glutamate + NADP(+) + H2O = 2-oxoglutarate + NH4(+) + NADPH + H(+). The sequence is that of Probable glutamate dehydrogenase 3 (GSH3) from Arabidopsis thaliana (Mouse-ear cress).